Here is a 247-residue protein sequence, read N- to C-terminus: Probable proteasome subunit alpha type-5 (247 aa).

Phosphothreonine is present on Thr-55.

The protein belongs to the peptidase T1A family. The 26S proteasome consists of a 20S proteasome core and two 19S regulatory subunits. The 20S proteasome core is composed of 28 subunits that are arranged in four stacked rings, resulting in a barrel-shaped structure. The two end rings are each formed by seven alpha subunits, and the two central rings are each formed by seven beta subunits. The catalytic chamber with the active sites is on the inside of the barrel.

Its subcellular location is the cytoplasm. It is found in the nucleus. Its function is as follows. The proteasome is a multicatalytic proteinase complex which is characterized by its ability to cleave peptides with Arg, Phe, Tyr, Leu, and Glu adjacent to the leaving group at neutral or slightly basic pH. The proteasome has an ATP-dependent proteolytic activity. This Schizosaccharomyces pombe (strain 972 / ATCC 24843) (Fission yeast) protein is Probable proteasome subunit alpha type-5 (pup2).